The chain runs to 120 residues: Basic phospholipase A2 homolog LmutTX (120 aa).

Intrachain disulfides connect Cys-26–Cys-114, Cys-28–Cys-44, Cys-43–Cys-95, Cys-49–Cys-120, Cys-50–Cys-88, Cys-57–Cys-81, and Cys-75–Cys-86.

It belongs to the phospholipase A2 family. Group II subfamily. K49 sub-subfamily. In terms of assembly, monomer. In terms of tissue distribution, expressed by the venom gland.

The protein localises to the secreted. Functionally, snake venom phospholipase A2 homolog that lacks enzymatic activity. Shows moderate cytotoxicity against C2C12 myotubes (activity above 200 ug/mL). Also shows antibacterial activity against both Gram-positive and Gram-negative bacteria. A model of myotoxic mechanism has been proposed: an apo Lys49-PLA2 is activated by the entrance of a hydrophobic molecule (e.g. fatty acid) at the hydrophobic channel of the protein leading to a reorientation of a monomer. This reorientation causes a transition between 'inactive' to 'active' states, causing alignment of C-terminal and membrane-docking sites (MDoS) side-by-side and putting the membrane-disruption sites (MDiS) in the same plane, exposed to solvent and in a symmetric position for both monomers. The MDoS region stabilizes the toxin on membrane by the interaction of charged residues with phospholipid head groups. Subsequently, the MDiS region destabilizes the membrane with penetration of hydrophobic residues. This insertion causes a disorganization of the membrane, allowing an uncontrolled influx of ions (i.e. calcium and sodium), and eventually triggering irreversible intracellular alterations and cell death. In Lachesis muta muta (Bushmaster), this protein is Basic phospholipase A2 homolog LmutTX.